A 182-amino-acid polypeptide reads, in one-letter code: Large ribosomal subunit protein uL10 (182 aa).

This sequence belongs to the universal ribosomal protein uL10 family. Part of the ribosomal stalk of the 50S ribosomal subunit. The N-terminus interacts with L11 and the large rRNA to form the base of the stalk. The C-terminus forms an elongated spine to which L12 dimers bind in a sequential fashion forming a multimeric L10(L12)X complex.

Functionally, forms part of the ribosomal stalk, playing a central role in the interaction of the ribosome with GTP-bound translation factors. The sequence is that of Large ribosomal subunit protein uL10 from Leptothrix cholodnii (strain ATCC 51168 / LMG 8142 / SP-6) (Leptothrix discophora (strain SP-6)).